The following is a 202-amino-acid chain: Large ribosomal subunit protein bL25 (202 aa).

The protein belongs to the bacterial ribosomal protein bL25 family. CTC subfamily. Part of the 50S ribosomal subunit; part of the 5S rRNA/L5/L18/L25 subcomplex. Contacts the 5S rRNA. Binds to the 5S rRNA independently of L5 and L18.

Its function is as follows. This is one of the proteins that binds to the 5S RNA in the ribosome where it forms part of the central protuberance. The protein is Large ribosomal subunit protein bL25 of Methylococcus capsulatus (strain ATCC 33009 / NCIMB 11132 / Bath).